A 300-amino-acid polypeptide reads, in one-letter code: Lysenin-related protein 2 (300 aa).

The segment at 12 to 35 (EQIEVDVVAVWKEGYVYENRGSTS) is N-terminal cap domain. Residues 36–109 (VEQKIKITKG…SKEIEHTITI (74 aa)) are beta-hairpin domain. The segment at 110 to 158 (PPTSKFTRWQLNADVGGADIEYMYLIDEVTPIGGTLSIPQVIKSRAKIL) is N-terminal cap domain. Positions 159 to 299 (VGREIYLGET…EDKWILEVVK (141 aa)) are C-terminal receptor-binding domain. Lys187, Ser229, Tyr235, and Tyr284 together coordinate an N-(acyl)-sphingosylphosphocholine. Cys274 and Cys285 form a disulfide bridge.

It belongs to the lysenin family. As to quaternary structure, binds to sphingomyelin as a monomer by using its C-terminal domain. Forms a nonamer when sphingomyelin/LRP-2 ratio is lower than ca 500. Oligomerization, but not binding, is influenced by the fluidity of sphingomyelin. Expressed by coelomocytes.

The protein resides in the secreted. It is found in the target cell membrane. Functionally, pore-forming toxin that specifically binds sphingomyelin in the plasma membrane of various cells. Has hemolytic activity. It also has antibacterial activities against B.megaterium. The polypeptide is Lysenin-related protein 2 (Eisenia fetida (Red wiggler worm)).